A 71-amino-acid chain; its full sequence is Omega-conotoxin-like Ac6.4 (71 aa).

The signal sequence occupies residues 1–22 (MKLTCVVIVAVLLLTACQLLTA). Residues 23–45 (DDSRGTQKHRALRSDTKLSMSTR) constitute a propeptide that is removed on maturation. Cystine bridges form between Cys-46/Cys-61, Cys-53/Cys-65, and Cys-60/Cys-70. Position 70 is a cysteine amide (Cys-70).

This sequence belongs to the conotoxin O1 superfamily. As to expression, expressed by the venom duct.

The protein localises to the secreted. Omega-conotoxins act at presynaptic membranes, they bind and block voltage-gated calcium channels (Cav). The sequence is that of Omega-conotoxin-like Ac6.4 from Conus achatinus (Little frog cone).